A 3381-amino-acid polypeptide reads, in one-letter code: Versican core protein (3381 aa).

Positions methionine 1–alanine 20 are cleaved as a signal peptide. The 127-residue stretch at leucine 21–threonine 147 folds into the Ig-like V-type domain. 5 cysteine pairs are disulfide-bonded: cysteine 44–cysteine 131, cysteine 173–cysteine 244, cysteine 197–cysteine 218, cysteine 271–cysteine 346, and cysteine 295–cysteine 316. The N-linked (GlcNAc...) asparagine glycan is linked to asparagine 57. Link domains are found at residues valine 151 to valine 246 and aspartate 252 to lysine 348. N-linked (GlcNAc...) asparagine glycans are attached at residues asparagine 331 and asparagine 352. Positions proline 349 to glycine 1336 are GAG-alpha (glucosaminoglycan attachment domain). The span at proline 417–glutamate 427 shows a compositional bias: polar residues. 2 disordered regions span residues proline 417 to lysine 437 and glutamate 603 to arginine 623. The O-linked (Xyl...) (chondroitin sulfate) serine glycan is linked to serine 660. The tract at residues aspartate 816–proline 866 is disordered. An N-linked (GlcNAc...) asparagine glycan is attached at asparagine 817. The segment covering glycine 846–threonine 863 has biased composition (basic and acidic residues). N-linked (GlcNAc...) asparagine glycosylation is found at asparagine 965 and asparagine 1017. Residues glutamate 1043–proline 1052 are compositionally biased toward basic and acidic residues. Disordered stretches follow at residues glutamate 1043–serine 1081 and phenylalanine 1218–glutamate 1244. Residue asparagine 1333 is glycosylated (N-linked (GlcNAc...) asparagine). The segment at arginine 1337–glycine 3074 is GAG-beta. Residues methionine 1338 to threonine 1362 are disordered. The segment covering serine 1352 to threonine 1362 has biased composition (acidic residues). Asparagine 1393 carries N-linked (GlcNAc...) asparagine glycosylation. A compositionally biased stretch (basic and acidic residues) spans lysine 1417–glutamine 1428. 3 disordered regions span residues lysine 1417–serine 1446, glycine 1455–isoleucine 1474, and threonine 1484–serine 1512. Residues asparagine 1437 and asparagine 1463 are each glycosylated (N-linked (GlcNAc...) asparagine). O-linked (Xyl...) (chondroitin sulfate) serine glycans are attached at residues serine 1539 and serine 1621. An N-linked (GlcNAc...) asparagine glycan is attached at asparagine 1653. Positions proline 1708 to valine 1785 are disordered. Over residues glutamate 1712–glycine 1721 the composition is skewed to basic and acidic residues. Over residues alanine 1726–leucine 1738 the composition is skewed to polar residues. Residues serine 1743–alanine 1761 show a composition bias toward low complexity. Positions lysine 1764–valine 1784 are enriched in polar residues. O-linked (Xyl...) (chondroitin sulfate) serine glycans are attached at residues serine 1928 and serine 1952. A compositionally biased stretch (polar residues) spans proline 1964 to threonine 1976. Disordered regions lie at residues proline 1964–leucine 1986 and glutamate 2041–valine 2126. Asparagine 1974, asparagine 2045, asparagine 2074, and asparagine 2103 each carry an N-linked (GlcNAc...) asparagine glycan. The span at serine 2065–histidine 2075 shows a compositional bias: basic and acidic residues. At serine 2109 the chain carries Phosphoserine. Residues serine 2240 and serine 2247 are each glycosylated (O-linked (Xyl...) (chondroitin sulfate) serine). Asparagine 2263, asparagine 2290, and asparagine 2356 each carry an N-linked (GlcNAc...) asparagine glycan. 3 disordered regions span residues glutamate 2338–lysine 2388, glutamate 2490–threonine 2512, and threonine 2594–glutamine 2615. 2 stretches are compositionally biased toward polar residues: residues leucine 2345–glutamine 2357 and threonine 2367–valine 2383. Serine 2607 and serine 2608 each carry phosphoserine. Threonine 2612 is subject to Phosphothreonine. Residues asparagine 2623 and asparagine 2641 are each glycosylated (N-linked (GlcNAc...) asparagine). Residues serine 2714, serine 2715, and serine 2759 are each glycosylated (O-linked (Xyl...) (chondroitin sulfate) serine). A disordered region spans residues proline 2819–lysine 2893. Positions alanine 2840–valine 2851 are enriched in polar residues. Asparagine 2919 and asparagine 3052 each carry an N-linked (GlcNAc...) asparagine glycan. Residues glycine 3074–glutamate 3110 enclose the EGF-like 1 domain. Disulfide bonds link cysteine 3078–cysteine 3089, cysteine 3083–cysteine 3098, cysteine 3100–cysteine 3109, cysteine 3116–cysteine 3127, cysteine 3121–cysteine 3136, cysteine 3138–cysteine 3147, cysteine 3154–cysteine 3165, cysteine 3182–cysteine 3274, cysteine 3250–cysteine 3266, cysteine 3281–cysteine 3324, and cysteine 3310–cysteine 3337. Residues aspartate 3112–glutamate 3148 form the EGF-like 2; calcium-binding domain. Residues phenylalanine 3161 to lysine 3275 form the C-type lectin domain. A Sushi domain is found at valine 3279 to asparagine 3339. Asparagine 3354 and asparagine 3364 each carry an N-linked (GlcNAc...) asparagine glycan. The span at serine 3355–threonine 3365 shows a compositional bias: polar residues. Residues serine 3355–arginine 3381 form a disordered region.

The protein belongs to the aggrecan/versican proteoglycan family. In terms of assembly, interacts with FBLN1. Phosphorylated by FAM20C in the extracellular medium. In terms of processing, proteolytically cleaved by ADAMTS5 and ADAMTS15 in the pericellular matrix surrounding myoblasts, facilitating myoblast contact and fusion which is required for skeletal muscle development and regeneration. In terms of tissue distribution, cerebral white matter. Isoform V0 and isoform V1 are expressed in the central nervous system, and in a number of mesenchymal and epithelial tissues; the major isoform V2 is restricted to the central nervous system.

Its subcellular location is the secreted. The protein resides in the extracellular space. It localises to the extracellular matrix. It is found in the cell projection. The protein localises to the cilium. Its subcellular location is the photoreceptor outer segment. The protein resides in the interphotoreceptor matrix. In terms of biological role, may play a role in intercellular signaling and in connecting cells with the extracellular matrix. May take part in the regulation of cell motility, growth and differentiation. Binds hyaluronic acid. This Bos taurus (Bovine) protein is Versican core protein (VCAN).